The sequence spans 192 residues: Probable nicotinate-nucleotide adenylyltransferase (192 aa).

The protein belongs to the NadD family.

The catalysed reaction is nicotinate beta-D-ribonucleotide + ATP + H(+) = deamido-NAD(+) + diphosphate. Its pathway is cofactor biosynthesis; NAD(+) biosynthesis; deamido-NAD(+) from nicotinate D-ribonucleotide: step 1/1. Functionally, catalyzes the reversible adenylation of nicotinate mononucleotide (NaMN) to nicotinic acid adenine dinucleotide (NaAD). This is Probable nicotinate-nucleotide adenylyltransferase from Cytophaga hutchinsonii (strain ATCC 33406 / DSM 1761 / CIP 103989 / NBRC 15051 / NCIMB 9469 / D465).